The chain runs to 274 residues: MRFAKGHGTENDFVILPDPDGELDLDAATVAALCDRRAGLGADGVLRVVRTKALDEPLTGEAATAQRCEWFMDYRNADGSVAEMCGNGVRVFARYLQEAGLVGAAAFEVGTRAGARHVVLEPDGNITVDMGPVRILGPGSARLADGPVHGTRISVGNPHLACRVARPVAEVDLSAPPLLRAEEFPQGANVEVFREVASGVLEMRVYERGAAETRSCGTGIVAAAAAATPPGEDARWTVRVPGGECTVVLESGAARLSGPAVIVAEGDVRLSALR.

Positions 11 and 76 each coordinate substrate. Cys-85 (proton donor) is an active-site residue. Residues 86–87, Asn-157, Asn-189, and 207–208 contribute to the substrate site; these read GN and ER. The active-site Proton acceptor is Cys-216. 217-218 contacts substrate; it reads GT.

The protein belongs to the diaminopimelate epimerase family. As to quaternary structure, homodimer.

Its subcellular location is the cytoplasm. The enzyme catalyses (2S,6S)-2,6-diaminopimelate = meso-2,6-diaminopimelate. It functions in the pathway amino-acid biosynthesis; L-lysine biosynthesis via DAP pathway; DL-2,6-diaminopimelate from LL-2,6-diaminopimelate: step 1/1. In terms of biological role, catalyzes the stereoinversion of LL-2,6-diaminopimelate (L,L-DAP) to meso-diaminopimelate (meso-DAP), a precursor of L-lysine and an essential component of the bacterial peptidoglycan. The sequence is that of Diaminopimelate epimerase from Thermobifida fusca (strain YX).